The primary structure comprises 366 residues: Putative [LysW]-aminoadipate semialdehyde/glutamate semialdehyde transaminase (366 aa).

Pyridoxal 5'-phosphate is bound by residues 90–91 (GT) and F117. R120 contributes to the substrate binding site. 202 to 205 (DEVQ) provides a ligand contact to pyridoxal 5'-phosphate. K230 bears the N6-(pyridoxal phosphate)lysine mark. S254 lines the substrate pocket. T255 serves as a coordination point for pyridoxal 5'-phosphate.

The protein belongs to the class-III pyridoxal-phosphate-dependent aminotransferase family. LysJ subfamily. In terms of assembly, homodimer. It depends on pyridoxal 5'-phosphate as a cofactor.

The protein resides in the cytoplasm. The catalysed reaction is [amino-group carrier protein]-C-terminal-gamma-(L-lysyl)-L-glutamate + 2-oxoglutarate = [amino-group carrier protein]-C-terminal-N-(1-carboxy-5-oxopentan-1-yl)-L-glutamine + L-glutamate. The enzyme catalyses [amino-group carrier protein]-C-terminal-gamma-(L-ornithyl)-L-glutamate + 2-oxoglutarate = [amino-group carrier protein]-C-terminal-gamma-(L-glutamyl-5-semialdehyde)-L-glutamate + L-glutamate. It functions in the pathway amino-acid biosynthesis; L-lysine biosynthesis via AAA pathway; L-lysine from L-alpha-aminoadipate (Thermus route): step 4/5. Its pathway is amino-acid biosynthesis; L-arginine biosynthesis. In terms of biological role, involved in both the arginine and lysine biosynthetic pathways. The chain is Putative [LysW]-aminoadipate semialdehyde/glutamate semialdehyde transaminase from Pyrococcus horikoshii (strain ATCC 700860 / DSM 12428 / JCM 9974 / NBRC 100139 / OT-3).